The chain runs to 201 residues: Sterile alpha motif domain-containing protein 12 (201 aa).

The SAM domain occupies 77–143 (WTQQDVCKWL…LQQVLQLKVR (67 aa)).

In terms of tissue distribution, expressed in the brain.

The polypeptide is Sterile alpha motif domain-containing protein 12 (SAMD12) (Homo sapiens (Human)).